The chain runs to 95 residues: Small ribosomal subunit protein bS20 (95 aa).

This sequence belongs to the bacterial ribosomal protein bS20 family.

Its function is as follows. Binds directly to 16S ribosomal RNA. The chain is Small ribosomal subunit protein bS20 from Ehrlichia ruminantium (strain Gardel).